A 182-amino-acid chain; its full sequence is Dynactin subunit 5 (182 aa).

Position 1 is an N-acetylmethionine (Met-1).

Belongs to the dynactin subunits 5/6 family. Dynactin subunit 5 subfamily. In terms of assembly, subunit of dynactin, a multiprotein complex part of a tripartite complex with dynein and a adapter, such as BICDL1, BICD2 or HOOK3. The dynactin complex is built around ACTR1A/ACTB filament and consists of an actin-related filament composed of a shoulder domain, a pointed end and a barbed end. Its length is defined by its flexible shoulder domain. The soulder is composed of 2 DCTN1 subunits, 4 DCTN2 and 2 DCTN3. The 4 DCNT2 (via N-terminus) bind the ACTR1A filament and act as molecular rulers to determine the length. The pointed end is important for binding dynein-dynactin cargo adapters. Consists of 4 subunits: ACTR10, DCNT4, DCTN5 and DCTN6. Within the complex DCTN6 forms a heterodimer with DCTN5. The barbed end is composed of a CAPZA1:CAPZB heterodimers, which binds ACTR1A/ACTB filament and dynactin and stabilizes dynactin. Interacts with N4BP2L1.

Its subcellular location is the cytoplasm. The protein resides in the cytoskeleton. It is found in the chromosome. It localises to the centromere. The protein localises to the kinetochore. In terms of biological role, part of the dynactin complex that activates the molecular motor dynein for ultra-processive transport along microtubules. The polypeptide is Dynactin subunit 5 (Homo sapiens (Human)).